Consider the following 1059-residue polypeptide: Isoleucine--tRNA ligase (1059 aa).

Residues 59–69 carry the 'HIGH' region motif; that stretch reads PFANGLPHYGH. A 'KMSKS' region motif is present at residues 637–641; sequence KMSKS. Lys-640 provides a ligand contact to ATP.

It belongs to the class-I aminoacyl-tRNA synthetase family. IleS type 2 subfamily. Monomer. Requires Zn(2+) as cofactor.

Its subcellular location is the cytoplasm. The enzyme catalyses tRNA(Ile) + L-isoleucine + ATP = L-isoleucyl-tRNA(Ile) + AMP + diphosphate. In terms of biological role, catalyzes the attachment of isoleucine to tRNA(Ile). As IleRS can inadvertently accommodate and process structurally similar amino acids such as valine, to avoid such errors it has two additional distinct tRNA(Ile)-dependent editing activities. One activity is designated as 'pretransfer' editing and involves the hydrolysis of activated Val-AMP. The other activity is designated 'posttransfer' editing and involves deacylation of mischarged Val-tRNA(Ile). The sequence is that of Isoleucine--tRNA ligase from Mycobacterium leprae (strain TN).